Reading from the N-terminus, the 426-residue chain is MTKALNGVRILDFTHVQSGPTCTQLLAWFGADVIKVERPGVGDITRGQLQDIPNVDSLYFTMLNHNKRSITLDTKNPKGKEVLTALIKSCDVLVENFGPGVLDRMGFSWEKIQSLNPKMIVASIKGFGPGPYEDCKVYENVAQCTGGAASTTGFRDGLPLVTGAQIGDSGTGLHLALGIVTALYQRTVTGRGQKVTAAMQDGVLNLSRVKLRDQQRLAHGPLKEYSQFGEGIPFGDAVPRAGNDSGGGQPGRILKCKGWETDPNAYIYFITQAPVWEKICDVIGEPDWKTHPDYAKPAARLKHLNDIFARIEQWTMTKTKFEAMDILNKDDIPCGPILSMKELAEDQSLRATGTVVEVDHPTRGKYLSVGNPIKMSDSPTEVMRSPLLGEHTDEILRQVLGFSDQQVAEVHDSGALEPPRKAAAAE.

CoA is bound by residues 17-18 (QS), Arg38, 72-75 (LDTK), 96-98 (NFG), Arg104, and 136-139 (KVYE). Asp168 acts as the Nucleophile in catalysis. Residue 247–249 (GGQ) participates in substrate binding.

This sequence belongs to the CoA-transferase III family. Frc subfamily. In terms of assembly, homodimer.

It catalyses the reaction formyl-CoA + oxalate = oxalyl-CoA + formate. The protein operates within metabolic intermediate degradation; oxalate degradation; CO(2) and formate from oxalate: step 1/2. In terms of biological role, involved in the catabolism of oxalate and in the adapatation to low pH via the induction of the oxalate-dependent acid tolerance response (ATR). Catalyzes the transfer of the CoA moiety from formyl-CoA to oxalate. This is Formyl-CoA:oxalate CoA-transferase from Rhodopseudomonas palustris (strain BisB18).